The chain runs to 235 residues: ATP synthase subunit a (235 aa).

A run of 5 helical transmembrane segments spans residues 17 to 37 (TTNIVSGLIIYAIVFFTLYGM), 76 to 96 (SFFAFVLFVFIFFANQFGLIF), 113 to 133 (PVVTLTLSLMVMVLAFAAGVA), 179 to 201 (LLMSLIANMAFSHGILTIIPGLF), and 211 to 230 (VFIGSIQAYVFVTLTTVYIS).

The protein belongs to the ATPase A chain family. In terms of assembly, F-type ATPases have 2 components, CF(1) - the catalytic core - and CF(0) - the membrane proton channel. CF(1) has five subunits: alpha(3), beta(3), gamma(1), delta(1), epsilon(1). CF(0) has three main subunits: a(1), b(2) and c(9-12). The alpha and beta chains form an alternating ring which encloses part of the gamma chain. CF(1) is attached to CF(0) by a central stalk formed by the gamma and epsilon chains, while a peripheral stalk is formed by the delta and b chains.

It localises to the cell membrane. In terms of biological role, key component of the proton channel; it plays a direct role in the translocation of protons across the membrane. This Limosilactobacillus reuteri subsp. reuteri (strain JCM 1112) (Lactobacillus reuteri) protein is ATP synthase subunit a.